Reading from the N-terminus, the 235-residue chain is uncharacterized protein (235 aa).

It to B.subtilis YncM.

This is an uncharacterized protein from Bacillus subtilis (strain 168).